We begin with the raw amino-acid sequence, 346 residues long: Peroxidase 19 (346 aa).

The signal sequence occupies residues 1–31 (MHVISLSLSSIFFFLFLTSTILISPVQPTTS). Cystine bridges form between cysteine 51/cysteine 134, cysteine 84/cysteine 89, cysteine 140/cysteine 342, and cysteine 219/cysteine 251. Histidine 82 (proton acceptor) is an active-site residue. Ca(2+)-binding residues include aspartate 83, valine 86, glycine 88, aspartate 90, and serine 92. A substrate-binding site is contributed by proline 182. N-linked (GlcNAc...) asparagine glycosylation occurs at asparagine 185. Histidine 212 contributes to the heme b binding site. Threonine 213 is a Ca(2+) binding site. Residues aspartate 265, threonine 268, and aspartate 273 each coordinate Ca(2+).

The protein belongs to the peroxidase family. Classical plant (class III) peroxidase subfamily. Requires heme b as cofactor. Ca(2+) is required as a cofactor.

The protein localises to the secreted. It carries out the reaction 2 a phenolic donor + H2O2 = 2 a phenolic radical donor + 2 H2O. Its function is as follows. Removal of H(2)O(2), oxidation of toxic reductants, biosynthesis and degradation of lignin, suberization, auxin catabolism, response to environmental stresses such as wounding, pathogen attack and oxidative stress. These functions might be dependent on each isozyme/isoform in each plant tissue. The chain is Peroxidase 19 (PER19) from Arabidopsis thaliana (Mouse-ear cress).